A 58-amino-acid chain; its full sequence is Small ribosomal subunit protein eS30 (58 aa).

The disordered stretch occupies residues 1-58 (MGKVHGSLARAGKVKNQTPKVPKLDKKKRLTGRAKKRQLYNRRFSDNGGRKKGPNSKA). Basic residues predominate over residues 25–40 (DKKKRLTGRAKKRQLY).

The protein belongs to the eukaryotic ribosomal protein eS30 family. Component of the small ribosomal subunit. Mature ribosomes consist of a small (40S) and a large (60S) subunit. The 40S subunit contains about 32 different proteins and 1 molecule of RNA (18S). The 60S subunit contains about 42 different proteins and 3 molecules of RNA (28S, 5.8S and 5S).

Its subcellular location is the cytoplasm. In terms of biological role, component of the ribosome, a large ribonucleoprotein complex responsible for the synthesis of proteins in the cell. The small ribosomal subunit (SSU) binds messenger RNAs (mRNAs) and translates the encoded message by selecting cognate aminoacyl-transfer RNA (tRNA) molecules. The large subunit (LSU) contains the ribosomal catalytic site termed the peptidyl transferase center (PTC), which catalyzes the formation of peptide bonds, thereby polymerizing the amino acids delivered by tRNAs into a polypeptide chain. The nascent polypeptides leave the ribosome through a tunnel in the LSU and interact with protein factors that function in enzymatic processing, targeting, and the membrane insertion of nascent chains at the exit of the ribosomal tunnel. This Plasmodium falciparum (isolate 3D7) protein is Small ribosomal subunit protein eS30.